A 310-amino-acid polypeptide reads, in one-letter code: Beta-1,3-galactosyltransferase 5 (310 aa).

Topologically, residues 1-7 (MAFPKMR) are cytoplasmic. A helical; Signal-anchor for type II membrane protein membrane pass occupies residues 8-28 (LMYICLLVLGALCLYFSMYSL). Residues 29 to 310 (NPFKEQSFVY…NSRGEDCPPV (282 aa)) are Lumenal-facing. N-linked (GlcNAc...) asparagine glycans are attached at residues Asn130, Asn174, and Asn231.

The protein belongs to the glycosyltransferase 31 family. Expressed in stomach, jejunum, colon, pancreas, small intestine, testis and gastrointestinal and pancreatic cancer cell lines. Hardly detected in lung, liver, adrenal gland and peripheral blood leukocytes.

The protein resides in the golgi apparatus membrane. The enzyme catalyses a globoside Gb4Cer (d18:1(4E)) + UDP-alpha-D-galactose = a globoside GalGb4Cer (d18:1(4E)) + UDP + H(+). Its pathway is protein modification; protein glycosylation. Its function is as follows. Catalyzes the transfer of Gal to GlcNAc-based acceptors with a preference for the core3 O-linked glycan GlcNAc(beta1,3)GalNAc structure. Can use glycolipid LC3Cer as an efficient acceptor. The protein is Beta-1,3-galactosyltransferase 5 of Homo sapiens (Human).